Here is a 1233-residue protein sequence, read N- to C-terminus: Integrator complex subunit 4 homolog (1233 aa).

2 HEAT repeats span residues 236–273 (SLIN…NLDK) and 275–310 (SEEI…RGAS). Residues 426–473 (RLQQKQQQQQQQQQQQQQQPPQQQPSQQPNQQPNQQQTNVSGTHIATP) are disordered. The segment covering 428-462 (QQKQQQQQQQQQQQQQQPPQQQPSQQPNQQPNQQQ) has biased composition (low complexity). HEAT repeat units follow at residues 487–524 (ILES…RNDE), 525–561 (FAQK…NVVI), and 563–597 (EEQL…SNYS). Positions 767–792 (NNNTNNNNNNNNNNNNNNNNNNNNNN) are enriched in low complexity. Disordered stretches follow at residues 767 to 796 (NNNT…DEND) and 993 to 1057 (DKKL…TTTT). Acidic residues predominate over residues 1000–1013 (EENEENEENENNEN). Residues 1014-1030 (ENEKENGKNKEKEKNEN) show a composition bias toward basic and acidic residues. Low complexity predominate over residues 1046 to 1057 (KTTSELIKTTTT).

The protein belongs to the Integrator subunit 4 family. As to quaternary structure, component of the Integrator complex. The core complex associates with protein phosphatase 2A subunits, to form the Integrator-PP2A (INTAC) complex.

The protein localises to the nucleus. It is found in the cytoplasm. Component of the integrator complex, a multiprotein complex that terminates RNA polymerase II (Pol II) transcription in the promoter-proximal region of genes. The integrator complex provides a quality checkpoint during transcription elongation by driving premature transcription termination of transcripts that are unfavorably configured for transcriptional elongation: the complex terminates transcription by (1) catalyzing dephosphorylation of the C-terminal domain (CTD) of Pol II subunit polr2a, (2) degrading the exiting nascent RNA transcript via endonuclease activity and (3) promoting the release of Pol II from bound DNA. The integrator complex is also involved in terminating the synthesis of non-coding Pol II transcripts, such as enhancer RNAs (eRNAs), small nuclear RNAs (snRNAs), telomerase RNAs and long non-coding RNAs (lncRNAs). This Dictyostelium discoideum (Social amoeba) protein is Integrator complex subunit 4 homolog (ints4).